Reading from the N-terminus, the 241-residue chain is Small ribosomal subunit protein uS2 (241 aa).

It belongs to the universal ribosomal protein uS2 family.

The protein is Small ribosomal subunit protein uS2 of Photorhabdus laumondii subsp. laumondii (strain DSM 15139 / CIP 105565 / TT01) (Photorhabdus luminescens subsp. laumondii).